The chain runs to 216 residues: Twisted gastrulation protein homolog 1-A (216 aa).

The signal sequence occupies residues 1 to 25 (MKPSFLHIPAAALLLCSLWILPIYC). N-linked (GlcNAc...) asparagine glycans are attached at residues Asn52, Asn81, and Asn145.

It belongs to the twisted gastrulation protein family. As to quaternary structure, binds directly to bmp2, bmp4 and bmp7 and can form a ternary complex with bmps and chordin, thus preventing the binding of bmps to their cell surface receptors. In terms of tissue distribution, posterior defects are induced by overexpression. This may arise through alteration of bmp4 or chrd function in the developing tailbud region.

The protein resides in the secreted. Functionally, involved in dorsal-ventral patterning, permitting peak BMP signaling by antagonizing the residual anti-BMP activity of the cleavage products of chrd. Functions to promote the formation of ventral mesoderm by increasing the activity of bmp7 and other BMPS. Seems to antagonize BMP signaling by forming ternary complexes with chrd and BMPs, thereby preventing BMPs from binding to their receptors. In addition to the anti-BMP function, also has pro-BMP activity, partly mediated by cleavage and degradation of chrd, which releases BMPs from ternary complexes. May be an important modulator of BMP-regulated cartilage development and chondrocyte differentiation. This is Twisted gastrulation protein homolog 1-A (twsg1-a) from Xenopus laevis (African clawed frog).